Reading from the N-terminus, the 334-residue chain is Oligopeptide transport ATP-binding protein OppF (334 aa).

One can recognise an ABC transporter domain in the interval 12-265 (LEIADLKVHF…PLHPYTRALM (254 aa)). 57-64 (GESGCGKS) serves as a coordination point for ATP.

It belongs to the ABC transporter superfamily. The complex is composed of two ATP-binding proteins (OppD and OppF), two transmembrane proteins (OppB and OppC) and a solute-binding protein (OppA or MppA).

The protein localises to the cell inner membrane. The enzyme catalyses a [peptide](out) + ATP + H2O = a [peptide](in) + ADP + phosphate + H(+). The catalysed reaction is L-alanyl-gamma-D-glutamyl-meso-2,6-diaminopimelate(out) + ATP + H2O = L-alanyl-gamma-D-glutamyl-meso-2,6-diaminopimelate(in) + ADP + phosphate + H(+). Its function is as follows. Part of the ABC transporter complex OppABCDF involved in the uptake of oligopeptides and of the ABC transporter complex MppA-OppBCDF involved in the uptake of the cell wall murein tripeptide L-alanyl-gamma-D-glutamyl-meso-diaminopimelate. Probably responsible for energy coupling to the transport system. Plays an important nutritional role and is involved in the recycling of cell wall peptides. In Escherichia coli (strain K12), this protein is Oligopeptide transport ATP-binding protein OppF (oppF).